The following is a 458-amino-acid chain: Plant UBX domain-containing protein 2 (458 aa).

Residues 1 to 103 are disordered; it reads MDDVKDKLKG…APQDGFDPYG (103 aa). The segment covering 44 to 54 has biased composition (polar residues); the sequence is PIQNRFNSSQA. Residues 56–70 are compositionally biased toward pro residues; that stretch reads NPTPRPKPNPNPLPE. Residues 74-85 are compositionally biased toward polar residues; the sequence is SSSDQKISGSTR. A C2H2-type; atypical zinc finger spans residues 121–143; that stretch reads FECPICKNPFTSEEEVSVHVESC. The region spanning 181 to 248 is the PUB domain; sequence SSIDVLLRLF…EIWAVMDVPS (68 aa). Residues 349-433 form the UBX domain; the sequence is KRYKRSMIRV…ELVPSALIRF (85 aa).

Interacts with CDC48A in vitro and co-fractionates with membrane-associated but not soluble CDC48A in vivo.

It localises to the membrane. Its function is as follows. Facilitates the interaction of SYP31 and CDC48A, thereby regulating an CDC48A membrane-associated function. Appears to act as a negative regulator mediating the powdery mildew-plant interaction. This is Plant UBX domain-containing protein 2 from Arabidopsis thaliana (Mouse-ear cress).